We begin with the raw amino-acid sequence, 206 residues long: Ribosomal RNA large subunit methyltransferase E (206 aa).

Positions 60, 62, 80, 96, and 121 each coordinate S-adenosyl-L-methionine. Residue K161 is the Proton acceptor of the active site.

The protein belongs to the class I-like SAM-binding methyltransferase superfamily. RNA methyltransferase RlmE family.

It localises to the cytoplasm. The catalysed reaction is uridine(2552) in 23S rRNA + S-adenosyl-L-methionine = 2'-O-methyluridine(2552) in 23S rRNA + S-adenosyl-L-homocysteine + H(+). Functionally, specifically methylates the uridine in position 2552 of 23S rRNA at the 2'-O position of the ribose in the fully assembled 50S ribosomal subunit. This Nitrosomonas europaea (strain ATCC 19718 / CIP 103999 / KCTC 2705 / NBRC 14298) protein is Ribosomal RNA large subunit methyltransferase E.